A 346-amino-acid chain; its full sequence is Biotin synthase (346 aa).

The region spanning 38–256 is the Radical SAM core domain; sequence RQVQVSTLLS…IAVARIMMPT (219 aa). Residues Cys-53, Cys-57, and Cys-60 each coordinate [4Fe-4S] cluster. Residues Cys-97, Cys-128, Cys-188, and Arg-260 each coordinate [2Fe-2S] cluster.

This sequence belongs to the radical SAM superfamily. Biotin synthase family. Homodimer. [4Fe-4S] cluster is required as a cofactor. Requires [2Fe-2S] cluster as cofactor.

The catalysed reaction is (4R,5S)-dethiobiotin + (sulfur carrier)-SH + 2 reduced [2Fe-2S]-[ferredoxin] + 2 S-adenosyl-L-methionine = (sulfur carrier)-H + biotin + 2 5'-deoxyadenosine + 2 L-methionine + 2 oxidized [2Fe-2S]-[ferredoxin]. It functions in the pathway cofactor biosynthesis; biotin biosynthesis; biotin from 7,8-diaminononanoate: step 2/2. Its function is as follows. Catalyzes the conversion of dethiobiotin (DTB) to biotin by the insertion of a sulfur atom into dethiobiotin via a radical-based mechanism. This Escherichia fergusonii (strain ATCC 35469 / DSM 13698 / CCUG 18766 / IAM 14443 / JCM 21226 / LMG 7866 / NBRC 102419 / NCTC 12128 / CDC 0568-73) protein is Biotin synthase.